A 117-amino-acid chain; its full sequence is Huntingtin-interacting protein M (117 aa).

Basic and acidic residues-rich tracts occupy residues 1 to 11 (MSEKKSQEKPC) and 83 to 97 (QDRE…EPSR). Disordered stretches follow at residues 1–25 (MSEK…SRPE) and 74–117 (NINN…RRNG).

In terms of assembly, may interact with the N-terminus of HD.

The protein is Huntingtin-interacting protein M of Mus musculus (Mouse).